Here is a 201-residue protein sequence, read N- to C-terminus: Small ribosomal subunit protein uS4c (201 aa).

The S4 RNA-binding domain maps to M90–L153.

The protein belongs to the universal ribosomal protein uS4 family. Part of the 30S ribosomal subunit. Contacts protein S5. The interaction surface between S4 and S5 is involved in control of translational fidelity.

It localises to the plastid. It is found in the chloroplast. Functionally, one of the primary rRNA binding proteins, it binds directly to 16S rRNA where it nucleates assembly of the body of the 30S subunit. Its function is as follows. With S5 and S12 plays an important role in translational accuracy. This Gracilaria tenuistipitata var. liui (Red alga) protein is Small ribosomal subunit protein uS4c (rps4).